The chain runs to 246 residues: Osmotin-like protein OSML13 (246 aa).

An N-terminal signal peptide occupies residues 1–21 (MAYLRSSFVFFLLAFVTYTYA). Disulfide bonds link Cys-30–Cys-225, Cys-72–Cys-82, Cys-87–Cys-93, Cys-141–Cys-213, Cys-146–Cys-196, Cys-154–Cys-164, Cys-168–Cys-177, and Cys-178–Cys-183.

It belongs to the thaumatin family.

The polypeptide is Osmotin-like protein OSML13 (Solanum commersonii (Commerson's wild potato)).